Here is a 263-residue protein sequence, read N- to C-terminus: Triosephosphate isomerase (263 aa).

Asn-10–Lys-12 contacts substrate. The active-site Electrophile is the His-104. Catalysis depends on Glu-176, which acts as the Proton acceptor. Substrate contacts are provided by residues Gly-182, Ser-221, and Gly-242–Gly-243.

It belongs to the triosephosphate isomerase family. In terms of assembly, homodimer.

It localises to the cytoplasm. It carries out the reaction D-glyceraldehyde 3-phosphate = dihydroxyacetone phosphate. Its pathway is carbohydrate biosynthesis; gluconeogenesis. It participates in carbohydrate degradation; glycolysis; D-glyceraldehyde 3-phosphate from glycerone phosphate: step 1/1. Its function is as follows. Involved in the gluconeogenesis. Catalyzes stereospecifically the conversion of dihydroxyacetone phosphate (DHAP) to D-glyceraldehyde-3-phosphate (G3P). The chain is Triosephosphate isomerase from Haemophilus influenzae (strain PittEE).